The following is a 147-amino-acid chain: Large ribosomal subunit protein uL22 (147 aa).

This sequence belongs to the universal ribosomal protein uL22 family. In terms of assembly, part of the 50S ribosomal subunit.

This protein binds specifically to 23S rRNA; its binding is stimulated by other ribosomal proteins, e.g. L4, L17, and L20. It is important during the early stages of 50S assembly. It makes multiple contacts with different domains of the 23S rRNA in the assembled 50S subunit and ribosome. In terms of biological role, the globular domain of the protein is located near the polypeptide exit tunnel on the outside of the subunit, while an extended beta-hairpin is found that lines the wall of the exit tunnel in the center of the 70S ribosome. The sequence is that of Large ribosomal subunit protein uL22 from Fervidobacterium nodosum (strain ATCC 35602 / DSM 5306 / Rt17-B1).